Here is a 799-residue protein sequence, read N- to C-terminus: Cadherin-8 (799 aa).

The signal sequence occupies residues 1-29 (MPERLAETLLDLWTPLIILWITLPSFVYM). Positions 30-61 (APMNQAHVLTTGSPLELSRQSEEMRILNRSKR) are excised as a propeptide. Cadherin domains are found at residues 62–167 (GWVW…APEF), 168–276 (LNGP…PPKF), 277–391 (AQSL…PPVF), 392–494 (SSPT…DNAP), and 495–616 (EFAS…YVLP). The Extracellular portion of the chain corresponds to 62–621 (GWVWNQMFVL…PYVLPIGLSM (560 aa)). The N-linked (GlcNAc...) asparagine glycan is linked to asparagine 188. Asparagine 463, asparagine 473, and asparagine 544 each carry an N-linked (GlcNAc...) asparagine glycan. The helical transmembrane segment at 622 to 642 (GALIAILACIILLLVIVVLFV) threads the bilayer. The Cytoplasmic portion of the chain corresponds to 643 to 799 (TLRRHKNEPL…YSVGESDKET (157 aa)). A Phosphoserine modification is found at serine 795.

The protein localises to the cell membrane. Its function is as follows. Cadherins are calcium-dependent cell adhesion proteins. They preferentially interact with themselves in a homophilic manner in connecting cells; cadherins may thus contribute to the sorting of heterogeneous cell types. The protein is Cadherin-8 (Cdh8) of Rattus norvegicus (Rat).